We begin with the raw amino-acid sequence, 231 residues long: Ribosyldihydronicotinamide dehydrogenase [quinone] (231 aa).

FAD contacts are provided by residues His12 and 18-21 (FNGS). Ser80 is subject to Phosphoserine. An FAD-binding site is contributed by 104-107 (LYWF). 127-129 (FDI) contacts substrate. Residues 148-151 (TTGG) and Tyr156 each bind FAD. Zn(2+) is bound by residues His174 and His178. Glu194 serves as a coordination point for FAD. Ser197 carries the post-translational modification Phosphoserine. Arg201 serves as a coordination point for FAD. Cys223 serves as a coordination point for Zn(2+).

This sequence belongs to the NAD(P)H dehydrogenase (quinone) family. Homodimer. Zn(2+) serves as cofactor. It depends on FAD as a cofactor.

The protein resides in the cytoplasm. The catalysed reaction is 1-(beta-D-ribofuranosyl)-1,4-dihydronicotinamide + a quinone + H(+) = beta-nicotinamide D-riboside + a quinol. Functionally, the enzyme apparently serves as a quinone reductase in connection with conjugation reactions of hydroquinones involved in detoxification pathways as well as in biosynthetic processes such as the vitamin K-dependent gamma-carboxylation of glutamate residues in prothrombin synthesis. The polypeptide is Ribosyldihydronicotinamide dehydrogenase [quinone] (NQO2) (Pongo abelii (Sumatran orangutan)).